We begin with the raw amino-acid sequence, 91 residues long: Gem-associated protein 7 homolog (91 aa).

A Sm domain is found at 18–86 (LKFYQKMASA…VVGIEYNLVQ (69 aa)).

This sequence belongs to the gemin-7 family. Part of the core SMN complex at least composed of smn1, yip11/gem2, gem6, gem7 and gem8. Interacts with gem6; the interaction is direct. Interacts with gem8; the interaction is direct.

This Schizosaccharomyces pombe (strain 972 / ATCC 24843) (Fission yeast) protein is Gem-associated protein 7 homolog.